The sequence spans 161 residues: Cytochrome b6-f complex subunit 4 (161 aa).

Helical transmembrane passes span 37–57, 96–116, and 130–150; these read LLYI…GLAV, LLGV…PFIE, and AMTV…GAAF.

This sequence belongs to the cytochrome b family. PetD subfamily. The 4 large subunits of the cytochrome b6-f complex are cytochrome b6, subunit IV (17 kDa polypeptide, PetD), cytochrome f and the Rieske protein, while the 4 small subunits are PetG, PetL, PetM and PetN. The complex functions as a dimer.

It is found in the cellular thylakoid membrane. Its function is as follows. Component of the cytochrome b6-f complex, which mediates electron transfer between photosystem II (PSII) and photosystem I (PSI), cyclic electron flow around PSI, and state transitions. This Synechococcus elongatus protein is Cytochrome b6-f complex subunit 4.